The sequence spans 361 residues: NAD(P)H-quinone oxidoreductase subunit 1, chloroplastic (361 aa).

The next 7 membrane-spanning stretches (helical) occupy residues 28 to 48 (IWVL…VLVI), 99 to 119 (FTIG…VIPF), 128 to 148 (LSIG…GLLM), 249 to 269 (YSGI…LVSS), 270 to 290 (LFVT…LFVP), 301 to 321 (TIIC…ISIA), and 341 to 361 (FLLP…LLSL).

Belongs to the complex I subunit 1 family. As to quaternary structure, NDH is composed of at least 16 different subunits, 5 of which are encoded in the nucleus.

It is found in the plastid. The protein localises to the chloroplast thylakoid membrane. It catalyses the reaction a plastoquinone + NADH + (n+1) H(+)(in) = a plastoquinol + NAD(+) + n H(+)(out). The enzyme catalyses a plastoquinone + NADPH + (n+1) H(+)(in) = a plastoquinol + NADP(+) + n H(+)(out). In terms of biological role, NDH shuttles electrons from NAD(P)H:plastoquinone, via FMN and iron-sulfur (Fe-S) centers, to quinones in the photosynthetic chain and possibly in a chloroplast respiratory chain. The immediate electron acceptor for the enzyme in this species is believed to be plastoquinone. Couples the redox reaction to proton translocation, and thus conserves the redox energy in a proton gradient. This chain is NAD(P)H-quinone oxidoreductase subunit 1, chloroplastic, found in Jasminum nudiflorum (Winter jasmine).